A 57-amino-acid chain; its full sequence is DNA-directed RNA polymerase subunit Rpo6 (57 aa).

Belongs to the archaeal Rpo6/eukaryotic RPB6 RNA polymerase subunit family. Part of the RNA polymerase complex.

The protein localises to the cytoplasm. The catalysed reaction is RNA(n) + a ribonucleoside 5'-triphosphate = RNA(n+1) + diphosphate. DNA-dependent RNA polymerase (RNAP) catalyzes the transcription of DNA into RNA using the four ribonucleoside triphosphates as substrates. The polypeptide is DNA-directed RNA polymerase subunit Rpo6 (Pyrococcus abyssi (strain GE5 / Orsay)).